Reading from the N-terminus, the 284-residue chain is Nucleotide-binding protein CPS_4546 (284 aa).

Glycine 8–serine 15 contacts ATP. Aspartate 56–asparagine 59 lines the GTP pocket.

It belongs to the RapZ-like family.

Its function is as follows. Displays ATPase and GTPase activities. This Colwellia psychrerythraea (strain 34H / ATCC BAA-681) (Vibrio psychroerythus) protein is Nucleotide-binding protein CPS_4546.